Here is a 104-residue protein sequence, read N- to C-terminus: Large ribosomal subunit protein uL24 (104 aa).

The protein belongs to the universal ribosomal protein uL24 family. Part of the 50S ribosomal subunit.

Its function is as follows. One of two assembly initiator proteins, it binds directly to the 5'-end of the 23S rRNA, where it nucleates assembly of the 50S subunit. One of the proteins that surrounds the polypeptide exit tunnel on the outside of the subunit. In Sodalis glossinidius (strain morsitans), this protein is Large ribosomal subunit protein uL24.